The sequence spans 113 residues: Large ribosomal subunit protein uL22 (113 aa).

The protein belongs to the universal ribosomal protein uL22 family. In terms of assembly, part of the 50S ribosomal subunit.

Functionally, this protein binds specifically to 23S rRNA; its binding is stimulated by other ribosomal proteins, e.g. L4, L17, and L20. It is important during the early stages of 50S assembly. It makes multiple contacts with different domains of the 23S rRNA in the assembled 50S subunit and ribosome. Its function is as follows. The globular domain of the protein is located near the polypeptide exit tunnel on the outside of the subunit, while an extended beta-hairpin is found that lines the wall of the exit tunnel in the center of the 70S ribosome. This chain is Large ribosomal subunit protein uL22, found in Oceanobacillus iheyensis (strain DSM 14371 / CIP 107618 / JCM 11309 / KCTC 3954 / HTE831).